We begin with the raw amino-acid sequence, 287 residues long: 4-diphosphocytidyl-2-C-methyl-D-erythritol kinase (287 aa).

K12 is a catalytic residue. 97–107 (PMGGGLGGGSS) is an ATP binding site. Residue D139 is part of the active site.

It belongs to the GHMP kinase family. IspE subfamily.

It catalyses the reaction 4-CDP-2-C-methyl-D-erythritol + ATP = 4-CDP-2-C-methyl-D-erythritol 2-phosphate + ADP + H(+). It functions in the pathway isoprenoid biosynthesis; isopentenyl diphosphate biosynthesis via DXP pathway; isopentenyl diphosphate from 1-deoxy-D-xylulose 5-phosphate: step 3/6. In terms of biological role, catalyzes the phosphorylation of the position 2 hydroxy group of 4-diphosphocytidyl-2C-methyl-D-erythritol. This Marinobacter nauticus (strain ATCC 700491 / DSM 11845 / VT8) (Marinobacter aquaeolei) protein is 4-diphosphocytidyl-2-C-methyl-D-erythritol kinase.